A 108-amino-acid chain; its full sequence is ATP synthase peripheral stalk subunit F6, mitochondrial (108 aa).

A mitochondrion-targeting transit peptide spans 1–32 (MTVQRIFRLSSVLRSAVSVHLRRNIGVTAVAF). Residues K41, K46, and K79 each carry the N6-acetyllysine modification. An N6-acetyllysine; alternate mark is found at K84 and K99. An N6-succinyllysine; alternate mark is found at K84 and K99. At K105 the chain carries N6-acetyllysine. At S108 the chain carries Phosphoserine.

It belongs to the eukaryotic ATPase subunit F6 family. Component of the ATP synthase complex composed at least of ATP5F1A/subunit alpha, ATP5F1B/subunit beta, ATP5MC1/subunit c (homooctomer), MT-ATP6/subunit a, MT-ATP8/subunit 8, ATP5ME/subunit e, ATP5MF/subunit f, ATP5MG/subunit g, ATP5MK/subunit k, ATP5MJ/subunit j, ATP5F1C/subunit gamma, ATP5F1D/subunit delta, ATP5F1E/subunit epsilon, ATP5PF/subunit F6, ATP5PB/subunit b, ATP5PD/subunit d, ATP5PO/subunit OSCP. ATP synthase complex consists of a soluble F(1) head domain (subunits alpha(3) and beta(3)) - the catalytic core - and a membrane F(0) domain - the membrane proton channel (subunits c, a, 8, e, f, g, k and j). These two domains are linked by a central stalk (subunits gamma, delta, and epsilon) rotating inside the F1 region and a stationary peripheral stalk (subunits F6, b, d, and OSCP).

Its subcellular location is the mitochondrion. The protein localises to the mitochondrion inner membrane. Subunit F6, of the mitochondrial membrane ATP synthase complex (F(1)F(0) ATP synthase or Complex V) that produces ATP from ADP in the presence of a proton gradient across the membrane which is generated by electron transport complexes of the respiratory chain. ATP synthase complex consist of a soluble F(1) head domain - the catalytic core - and a membrane F(1) domain - the membrane proton channel. These two domains are linked by a central stalk rotating inside the F(1) region and a stationary peripheral stalk. During catalysis, ATP synthesis in the catalytic domain of F(1) is coupled via a rotary mechanism of the central stalk subunits to proton translocation. In vivo, can only synthesize ATP although its ATP hydrolase activity can be activated artificially in vitro. Part of the complex F(0) domain. Part of the complex F(0) domain and the peripheric stalk, which acts as a stator to hold the catalytic alpha(3)beta(3) subcomplex and subunit a/ATP6 static relative to the rotary elements. The protein is ATP synthase peripheral stalk subunit F6, mitochondrial of Rattus norvegicus (Rat).